Here is a 348-residue protein sequence, read N- to C-terminus: sn-glycerol-3-phosphate import ATP-binding protein UgpC 3 (348 aa).

The ABC transporter domain occupies 4 to 234 (INIVDVKKNY…PASLFVAGFI (231 aa)). Position 36-43 (36-43 (GPSGCGKS)) interacts with ATP.

It belongs to the ABC transporter superfamily. sn-glycerol-3-phosphate importer (TC 3.A.1.1.3) family. In terms of assembly, the complex is composed of two ATP-binding proteins (UgpC), two transmembrane proteins (UgpA and UgpE) and a solute-binding protein (UgpB).

It localises to the cell inner membrane. The catalysed reaction is sn-glycerol 3-phosphate(out) + ATP + H2O = sn-glycerol 3-phosphate(in) + ADP + phosphate + H(+). Part of the ABC transporter complex UgpBAEC involved in sn-glycerol-3-phosphate (G3P) import. Responsible for energy coupling to the transport system. In Rhizobium etli (strain ATCC 51251 / DSM 11541 / JCM 21823 / NBRC 15573 / CFN 42), this protein is sn-glycerol-3-phosphate import ATP-binding protein UgpC 3.